Here is a 236-residue protein sequence, read N- to C-terminus: MAATLLDVCAVVPAAGFGRRMQTECPKQYLSIGNKTILEHSVHALLAHPRVTRVVIAISPGDHRFAQLPLANHPQITVVDGGNERADSVLAGLQAVAKAQWVLVHDAARPCLHQDDLARLLTISENSRVGGILASPVRDTMKRGEPGKNAIAHTVERADLWHALTPQFFPRELLHDCLTRALNEGATITDEASALEYCGFHPALVEGRADNIKVTRPEDLALAEFYLTRTIHQEKA.

The protein belongs to the IspD/TarI cytidylyltransferase family. IspD subfamily. Homodimer.

It catalyses the reaction 2-C-methyl-D-erythritol 4-phosphate + CTP + H(+) = 4-CDP-2-C-methyl-D-erythritol + diphosphate. It participates in isoprenoid biosynthesis; isopentenyl diphosphate biosynthesis via DXP pathway; isopentenyl diphosphate from 1-deoxy-D-xylulose 5-phosphate: step 2/6. In terms of biological role, catalyzes the formation of 4-diphosphocytidyl-2-C-methyl-D-erythritol from CTP and 2-C-methyl-D-erythritol 4-phosphate (MEP). This chain is 2-C-methyl-D-erythritol 4-phosphate cytidylyltransferase, found in Salmonella heidelberg (strain SL476).